A 333-amino-acid chain; its full sequence is MIDRQTNEPKQKTRIILAPMQGLVDDVMRDLLTRIGGYDECVSEFVRITHTVHSRSIWLKYVPEIANGNKTFSGTPCTVQLLGSDADNMAANALEAVRFGANKIDLNFGCPAPTVNKHKGGAILLKEPELIFHIVKTLRGRLPAHIPLTAKMRLGYEDKSRALECACAIAEGGACGLTVHARTKAEGYEPPAHWEWIRKIRDSVNIPVTANGDVFSLQDYIGIKTISGCNSVMLGRGAVIRPDLARQIKQYENGGPVKDTDFAEVSKWIRQFFELCLTKEANNKYPLARLKQWLGMMKKEFAAAQNLFDRVRTVKDADEVRNILAEFEREMNT.

FMN is bound by residues 19 to 21 (PMQ) and Q80. The active-site Proton donor is C110. FMN is bound by residues K151, 211–213 (NGD), and 235–236 (GR).

Belongs to the Dus family. DusC subfamily. It depends on FMN as a cofactor.

It carries out the reaction 5,6-dihydrouridine(16) in tRNA + NADP(+) = uridine(16) in tRNA + NADPH + H(+). The catalysed reaction is 5,6-dihydrouridine(16) in tRNA + NAD(+) = uridine(16) in tRNA + NADH + H(+). In terms of biological role, catalyzes the synthesis of 5,6-dihydrouridine (D), a modified base found in the D-loop of most tRNAs, via the reduction of the C5-C6 double bond in target uridines. Specifically modifies U16 in tRNAs. The polypeptide is tRNA-dihydrouridine(16) synthase (Neisseria meningitidis serogroup B (strain ATCC BAA-335 / MC58)).